A 196-amino-acid polypeptide reads, in one-letter code: N-(5'-phosphoribosyl)anthranilate isomerase (196 aa).

This sequence belongs to the TrpF family.

The enzyme catalyses N-(5-phospho-beta-D-ribosyl)anthranilate = 1-(2-carboxyphenylamino)-1-deoxy-D-ribulose 5-phosphate. Its pathway is amino-acid biosynthesis; L-tryptophan biosynthesis; L-tryptophan from chorismate: step 3/5. This chain is N-(5'-phosphoribosyl)anthranilate isomerase, found in Sulfurovum sp. (strain NBC37-1).